Here is a 212-residue protein sequence, read N- to C-terminus: MTTQKIVPTKSTDGSKLFRHQAKFVAGAMNINQIPNFSLPEIAFVGKSNVGKSSLINTICSNKNLAKVSNTPGRTRQINFFNLADKLIIVDLPGYGFANVPISVKEQWGVLISYYLRNSYNLRLVNLLIDSRRGIKENDKKVADLLLANKREFQIIFTKSDKVTDHKNLHDEAQNFLATLNYSCNVMYVSNRSKEGARELKASLAKCIKPQK.

The EngB-type G domain maps to 38 to 210; that stretch reads SLPEIAFVGK…KASLAKCIKP (173 aa). GTP-binding positions include 46 to 53, 73 to 77, 91 to 94, 158 to 161, and 189 to 191; these read GKSNVGKS, GRTRQ, DLPG, TKSD, and VSN. Serine 53 and threonine 75 together coordinate Mg(2+).

It belongs to the TRAFAC class TrmE-Era-EngA-EngB-Septin-like GTPase superfamily. EngB GTPase family. Mg(2+) is required as a cofactor.

Its function is as follows. Necessary for normal cell division and for the maintenance of normal septation. In Rickettsia africae (strain ESF-5), this protein is Probable GTP-binding protein EngB.